The chain runs to 416 residues: Homogentisate 1,2-dioxygenase (416 aa).

Catalysis depends on H275, which acts as the Proton acceptor. Fe cation contacts are provided by H318 and E324. Residues Y333 and H354 each contribute to the homogentisate site. H354 is a binding site for Fe cation.

This sequence belongs to the homogentisate dioxygenase family. Hexamer; dimer of trimers. Requires Fe cation as cofactor.

It carries out the reaction homogentisate + O2 = 4-maleylacetoacetate + H(+). It functions in the pathway amino-acid degradation; L-phenylalanine degradation; acetoacetate and fumarate from L-phenylalanine: step 4/6. Involved in the catabolism of homogentisate (2,5-dihydroxyphenylacetate or 2,5-OH-PhAc), a central intermediate in the degradation of phenylalanine and tyrosine. Catalyzes the oxidative ring cleavage of the aromatic ring of homogentisate to yield maleylacetoacetate. This Legionella pneumophila (strain Corby) protein is Homogentisate 1,2-dioxygenase.